Consider the following 109-residue polypeptide: Flagellar hook-basal body complex protein FliE (109 aa).

This sequence belongs to the FliE family.

It is found in the bacterial flagellum basal body. This Nitrosomonas eutropha (strain DSM 101675 / C91 / Nm57) protein is Flagellar hook-basal body complex protein FliE.